Here is a 356-residue protein sequence, read N- to C-terminus: Heat-inducible transcription repressor HrcA (356 aa).

It belongs to the HrcA family.

Negative regulator of class I heat shock genes (grpE-dnaK-dnaJ and groELS operons). Prevents heat-shock induction of these operons. In Bartonella tribocorum (strain CIP 105476 / IBS 506), this protein is Heat-inducible transcription repressor HrcA.